Consider the following 76-residue polypeptide: Small ribosomal subunit protein bS18 (76 aa).

This sequence belongs to the bacterial ribosomal protein bS18 family. As to quaternary structure, part of the 30S ribosomal subunit. Forms a tight heterodimer with protein bS6.

In terms of biological role, binds as a heterodimer with protein bS6 to the central domain of the 16S rRNA, where it helps stabilize the platform of the 30S subunit. This is Small ribosomal subunit protein bS18 from Neisseria gonorrhoeae (strain ATCC 700825 / FA 1090).